Here is a 968-residue protein sequence, read N- to C-terminus: Phosphatidylserine decarboxylase 2 proenzyme (968 aa).

The N-terminal stretch at Met-1–Ser-25 is a signal peptide. Catalysis depends on charge relay system; for autoendoproteolytic cleavage activity residues Asp-500, His-570, and Ser-683. The active-site Schiff-base intermediate with substrate; via pyruvic acid; for decarboxylase activity is Ser-683. Ser-683 carries the pyruvic acid (Ser); by autocatalysis modification.

It belongs to the phosphatidylserine decarboxylase family. In terms of assembly, heterodimer of a large membrane-associated beta subunit and a small pyruvoyl-containing alpha subunit. Pyruvate is required as a cofactor. Post-translationally, is synthesized initially as an inactive proenzyme. Formation of the active enzyme involves a self-maturation process in which the active site pyruvoyl group is generated from an internal serine residue via an autocatalytic post-translational modification. Two non-identical subunits are generated from the proenzyme in this reaction, and the pyruvate is formed at the N-terminus of the alpha chain, which is derived from the carboxyl end of the proenzyme. The autoendoproteolytic cleavage occurs by a canonical serine protease mechanism, in which the side chain hydroxyl group of the serine supplies its oxygen atom to form the C-terminus of the beta chain, while the remainder of the serine residue undergoes an oxidative deamination to produce ammonia and the pyruvoyl prosthetic group on the alpha chain. During this reaction, the Ser that is part of the protease active site of the proenzyme becomes the pyruvoyl prosthetic group, which constitutes an essential element of the active site of the mature decarboxylase.

Its subcellular location is the parasitophorous vacuole. The protein resides in the cytoplasmic vesicle. It localises to the secretory vesicle. It carries out the reaction a 1,2-diacyl-sn-glycero-3-phospho-L-serine + H(+) = a 1,2-diacyl-sn-glycero-3-phosphoethanolamine + CO2. It participates in phospholipid metabolism; phosphatidylethanolamine biosynthesis; phosphatidylethanolamine from CDP-diacylglycerol: step 2/2. Its function is as follows. Catalyzes the formation of phosphatidylethanolamine (PtdEtn) from phosphatidylserine (PtdSer). Plays a central role in phospholipid metabolism and in the interorganelle trafficking of phosphatidylserine. Can act on liposomal and host cell PtdSer. In Toxoplasma gondii (strain ATCC 50853 / GT1), this protein is Phosphatidylserine decarboxylase 2 proenzyme.